A 310-amino-acid chain; its full sequence is tRNA dimethylallyltransferase (310 aa).

ATP is bound at residue 13–20; the sequence is GPTASGKT. 15–20 provides a ligand contact to substrate; it reads TASGKT. Interaction with substrate tRNA regions lie at residues 38-41, 162-166, 243-248, and 276-283; these read DSAL, QRLSR, RCVGYR, and KRQITWLR.

It belongs to the IPP transferase family. Monomer. Mg(2+) serves as cofactor.

The catalysed reaction is adenosine(37) in tRNA + dimethylallyl diphosphate = N(6)-dimethylallyladenosine(37) in tRNA + diphosphate. Functionally, catalyzes the transfer of a dimethylallyl group onto the adenine at position 37 in tRNAs that read codons beginning with uridine, leading to the formation of N6-(dimethylallyl)adenosine (i(6)A). The chain is tRNA dimethylallyltransferase from Aliivibrio fischeri (strain MJ11) (Vibrio fischeri).